The following is a 722-amino-acid chain: 1,4-alpha-glucan branching enzyme GlgB (722 aa).

Asp-401 functions as the Nucleophile in the catalytic mechanism. Glu-454 (proton donor) is an active-site residue.

The protein belongs to the glycosyl hydrolase 13 family. GlgB subfamily. Monomer.

The enzyme catalyses Transfers a segment of a (1-&gt;4)-alpha-D-glucan chain to a primary hydroxy group in a similar glucan chain.. The protein operates within glycan biosynthesis; glycogen biosynthesis. Functionally, catalyzes the formation of the alpha-1,6-glucosidic linkages in glycogen by scission of a 1,4-alpha-linked oligosaccharide from growing alpha-1,4-glucan chains and the subsequent attachment of the oligosaccharide to the alpha-1,6 position. The protein is 1,4-alpha-glucan branching enzyme GlgB of Rubrobacter xylanophilus (strain DSM 9941 / JCM 11954 / NBRC 16129 / PRD-1).